The primary structure comprises 300 residues: MQVDSRIVVTLTSRLYADEISKLQERVGSVVPLKDSHRLQNLNSVGMYSVYMRNVAPDFVAMFSYLSEATLAILDEVTPDTLVFSRLDHSQNYELKNVYYPSFAWHSHTLLTVVPPVFGREAATVALESNGFEIVFPVVMPHALAQAVLQKLMLYNIYARLSDANVGDVNMDHVRFHATTLHHMGRAYTLHIDQANPGGMLGLLDNLAIYLAIISALLPNSLARLLPAIMRHEQHELLNIFAGVAPPDDGGDFNIEDDMQKMESFMAYMQSVSSIFNLGPKLRLGQYSSETQSGTAWLAS.

This sequence belongs to the herpesviridae TRX2 protein family. In terms of assembly, interacts with TRX1 and major capisd protein/MCP.

Its subcellular location is the virion. It localises to the host nucleus. Functionally, structural component of the T=16 icosahedral capsid. The capsid is composed of pentamers and hexamers of major capsid protein/MCP, which are linked together by heterotrimers called triplexes. These triplexes are formed by a single molecule of triplex protein 1/TRX1 and two copies of triplex protein 2/TRX2. Additionally, TRX1 is required for efficient transport of TRX2 to the nucleus, which is the site of capsid assembly. In Equus caballus (Horse), this protein is Triplex capsid protein 2.